We begin with the raw amino-acid sequence, 448 residues long: Homogentisate 1,2-dioxygenase (448 aa).

Residues H340, E346, and H377 each contribute to the Fe cation site.

Belongs to the homogentisate dioxygenase family. It depends on Fe cation as a cofactor.

It catalyses the reaction homogentisate + O2 = 4-maleylacetoacetate + H(+). It functions in the pathway amino-acid degradation; L-phenylalanine degradation; acetoacetate and fumarate from L-phenylalanine: step 4/6. The chain is Homogentisate 1,2-dioxygenase (hmgA) from Emericella nidulans (strain FGSC A4 / ATCC 38163 / CBS 112.46 / NRRL 194 / M139) (Aspergillus nidulans).